The sequence spans 1052 residues: Protein HelA (1052 aa).

Helical transmembrane passes span 14–34 (WFVL…FQRL), 121–141 (LPPG…EIFM), 348–368 (GALL…AALI), 369–389 (TAMV…ENQI), 393–413 (LMSL…IIVE), 450–470 (SIFG…LTGV), 483–503 (IIAL…AVAI), 537–557 (VVIS…FHLG), 878–898 (LQIV…ISFG), 903–923 (ALLV…ALWL), 934–954 (VGFI…ITFI), 979–999 (PVLM…LATG), and 1011–1031 (VVIG…PGLY).

The protein belongs to the resistance-nodulation-cell division (RND) (TC 2.A.6) family.

It localises to the cell inner membrane. Functionally, presumed to function with HelC and HelB in efflux of an unidentified substrate. This is Protein HelA (helA) from Legionella pneumophila.